A 672-amino-acid chain; its full sequence is Hydroxyproline O-galactosyltransferase GALT5 (672 aa).

Over 1–28 (MKKPKLSKVEKIDKIDLFSSLWKQRSVR) the chain is Cytoplasmic. A helical; Signal-anchor for type II membrane protein transmembrane segment spans residues 29–49 (VIMAIGFLYLVIVSVEIPLVF). The Lumenal segment spans residues 50-672 (KSWSSSSVPL…QNKPECCNMR (623 aa)). The region spanning 191–392 (KLMELPCGLT…DIDVHSVFVA (202 aa)) is the Galectin domain. Residues Asn-306 and Asn-620 are each glycosylated (N-linked (GlcNAc...) asparagine).

Belongs to the glycosyltransferase 31 family. It depends on Mn(2+) as a cofactor. In terms of tissue distribution, expressed in juvenile leaves, stems, cauline leaves and siliques.

Its subcellular location is the golgi apparatus membrane. Its pathway is protein modification; protein glycosylation. Its function is as follows. Possesses hydroxyproline O-galactosyltransferase activity. Transfers galactose from UDP-galactose to hydroxyproline residues in the arabinogalactan proteins (AGPs). Is specific for AGPs containing non-contiguous peptidyl hydroxyproline residues. Utilizes UDP-galactose solely as sugar donor. The addition of galactose onto the peptidyl hydroxyproline residues in AGP core proteins represents the first committed step in arabinogalactan polysaccharide addition. AGP glycans play essential roles in both vegetative and reproductive plant growth. The polypeptide is Hydroxyproline O-galactosyltransferase GALT5 (Arabidopsis thaliana (Mouse-ear cress)).